The following is a 213-amino-acid chain: Large ribosomal subunit protein uL1 (213 aa).

This sequence belongs to the universal ribosomal protein uL1 family. In terms of assembly, part of the 50S ribosomal subunit.

In terms of biological role, binds directly to 23S rRNA. Probably involved in E site tRNA release. Its function is as follows. Protein L1 is also a translational repressor protein, it controls the translation of its operon by binding to its mRNA. The chain is Large ribosomal subunit protein uL1 from Methanosarcina mazei (strain ATCC BAA-159 / DSM 3647 / Goe1 / Go1 / JCM 11833 / OCM 88) (Methanosarcina frisia).